The following is a 128-amino-acid chain: Large ribosomal subunit protein uL22 (128 aa).

A disordered region spans residues methionine 1 to arginine 20. A compositionally biased stretch (basic and acidic residues) spans isoleucine 9–arginine 20.

The protein belongs to the universal ribosomal protein uL22 family. As to quaternary structure, part of the 50S ribosomal subunit.

In terms of biological role, this protein binds specifically to 23S rRNA; its binding is stimulated by other ribosomal proteins, e.g. L4, L17, and L20. It is important during the early stages of 50S assembly. It makes multiple contacts with different domains of the 23S rRNA in the assembled 50S subunit and ribosome. Functionally, the globular domain of the protein is located near the polypeptide exit tunnel on the outside of the subunit, while an extended beta-hairpin is found that lines the wall of the exit tunnel in the center of the 70S ribosome. The sequence is that of Large ribosomal subunit protein uL22 from Lachnospira eligens (strain ATCC 27750 / DSM 3376 / VPI C15-48 / C15-B4) (Eubacterium eligens).